An 81-amino-acid polypeptide reads, in one-letter code: Photosystem I iron-sulfur center (81 aa).

2 4Fe-4S ferredoxin-type domains span residues 2–31 (SHSV…MVAW) and 39–68 (IASA…VRVY). [4Fe-4S] cluster is bound by residues Cys-11, Cys-14, Cys-17, Cys-21, Cys-48, Cys-51, Cys-54, and Cys-58.

In terms of assembly, the eukaryotic PSI reaction center is composed of at least 11 subunits. The cofactor is [4Fe-4S] cluster.

Its subcellular location is the plastid. The protein resides in the chloroplast thylakoid membrane. It carries out the reaction reduced [plastocyanin] + hnu + oxidized [2Fe-2S]-[ferredoxin] = oxidized [plastocyanin] + reduced [2Fe-2S]-[ferredoxin]. In terms of biological role, apoprotein for the two 4Fe-4S centers FA and FB of photosystem I (PSI); essential for photochemical activity. FB is the terminal electron acceptor of PSI, donating electrons to ferredoxin. The C-terminus interacts with PsaA/B/D and helps assemble the protein into the PSI complex. Required for binding of PsaD and PsaE to PSI. PSI is a plastocyanin/cytochrome c6-ferredoxin oxidoreductase, converting photonic excitation into a charge separation, which transfers an electron from the donor P700 chlorophyll pair to the spectroscopically characterized acceptors A0, A1, FX, FA and FB in turn. This chain is Photosystem I iron-sulfur center, found in Guillardia theta (Cryptophyte).